Consider the following 517-residue polypeptide: GMP synthase [glutamine-hydrolyzing] (517 aa).

The region spanning K11–N202 is the Glutamine amidotransferase type-1 domain. The Nucleophile role is filled by C88. Catalysis depends on residues H176 and E178. One can recognise a GMPS ATP-PPase domain in the interval W203–R392. Residue S230–S236 coordinates ATP.

Homodimer.

It carries out the reaction XMP + L-glutamine + ATP + H2O = GMP + L-glutamate + AMP + diphosphate + 2 H(+). The protein operates within purine metabolism; GMP biosynthesis; GMP from XMP (L-Gln route): step 1/1. In terms of biological role, catalyzes the synthesis of GMP from XMP. The chain is GMP synthase [glutamine-hydrolyzing] from Lactobacillus johnsonii (strain CNCM I-12250 / La1 / NCC 533).